Reading from the N-terminus, the 210-residue chain is Insulin receptor (210 aa).

Residues 1 to 96 enclose the Fibronectin type-III domain; the sequence is VSNSSSQIIL…SQILKELEES (96 aa). 3 N-linked (GlcNAc...) asparagine glycosylation sites follow: N3, N21, and N68. Residues 55–78 are disordered; sequence WSPPFESEDSQKHNQSEYEDSAGE. The interval 103–111 is insulin-binding; that stretch reads EDYLHNVVF. Positions 116-169 are disordered; it reads TSSGTGAEDPRPSRKRRSLGDVGNVTVAVPTVAAFPNTSSTSTPTSPEEHRPFE. Over 133–210 the chain is Extracellular; the sequence is SLGDVGNVTV…EERCSVAAYV (78 aa). Residues 137–161 show a composition bias toward low complexity; that stretch reads VGNVTVAVPTVAAFPNTSSTSTPTS. N-linked (GlcNAc...) asparagine glycans are attached at residues N139 and N152. An intrachain disulfide couples C195 to C204.

It belongs to the protein kinase superfamily. Tyr protein kinase family. Insulin receptor subfamily. As to quaternary structure, tetramer of 2 alpha and 2 beta chains linked by disulfide bonds. The alpha chains carry the insulin-binding regions, while the beta chains carry the kinase domain. Forms a hybrid receptor with IGF1R, the hybrid is a tetramer consisting of 1 alpha chain and 1 beta chain of INSR and 1 alpha chain and 1 beta chain of IGF1R. Interacts with SORBS1 but dissociates from it following insulin stimulation. Binds SH2B2. Activated form of INSR interacts (via phosphorylated Tyrosine) with the PTB/PID domains of IRS1 and SHC1. The sequences surrounding the phosphorylated NPXY motif contribute differentially to either IRS1 or SHC1 recognition. Interacts (via tyrosines in the C-terminus) with IRS2 (via PTB domain and 591-786 AA); the 591-786 would be the primary anchor of IRS2 to INSR while the PTB domain would have a stabilizing action on the interaction with INSR. Interacts with the SH2 domains of the 85 kDa regulatory subunit of PI3K (PIK3R1) in vitro, when autophosphorylated on tyrosine residues. Interacts with SOCS7. Interacts with SOCS3. Interacts with SOCS1. Interacts with CAV2 (tyrosine-phosphorylated form); the interaction is increased with 'Tyr-27'phosphorylation of CAV2. Interacts with ARRB2. Interacts with GRB10; this interaction blocks the association between IRS1/IRS2 and INSR, significantly reduces insulin-stimulated tyrosine phosphorylation of IRS1 and IRS2 and thus decreases insulin signaling. Interacts with GRB7. Interacts with PDPK1. Interacts with GRB14 (via BPS domain). Interacts (via subunit alpha) with ENPP1 (via 485-599 AA); this interaction blocks autophosphorylation. Interacts with PTPRE. Interacts with STAT5B (via SH2 domain). Interacts with PTPRF. Interacts with ATIC; ATIC together with PRKAA2/AMPK2 and HACD3/PTPLAD1 is proposed to be part of a signaling netwok regulating INSR autophosphorylation and endocytosis. Interacts with the insulin receptor SORL1; this interaction strongly increases its surface exposure, hence strengthens insulin signal reception. Interacts (tyrosine phosphorylated) with CCDC88A/GIV (via SH2-like region); binding requires autophosphorylation of the INSR C-terminal region. Interacts with GNAI3; the interaction is probably mediated by CCDC88A/GIV. Interacts with LMBRD1. Interacts (in response to insulin stimulation) with NCK1; this interaction may recruit PTPN1 to mediate INSR dephosphorylation. Post-translationally, after being transported from the endoplasmic reticulum to the Golgi apparatus, the single glycosylated precursor is further glycosylated and then cleaved, followed by its transport to the plasma membrane. Autophosphorylated on tyrosine residues in response to insulin. Dephosphorylated by PTPN1, PTPRE and PTPRF. Dephosphorylated by PTPN2; down-regulates insulin-induced signaling. In terms of processing, S-nitrosylation by BLVRB inhibits the receptor tyrosine kinase, thereby inhibiting insulin signaling.

The protein localises to the cell membrane. It localises to the late endosome. Its subcellular location is the lysosome. It carries out the reaction L-tyrosyl-[protein] + ATP = O-phospho-L-tyrosyl-[protein] + ADP + H(+). Activated in response to insulin. Autophosphorylation activates the kinase activity. PTPN1, PTPRE and PTPRF dephosphorylate important tyrosine residues, thereby reducing INSR activity. Inhibited by ENPP1. GRB10 and GRB14 inhibit the catalytic activity of the INSR, they block access of substrates to the activated receptor. SOCS1 and SOCS3 act as negative regulators of INSR activity, they bind to the activated INRS and interfere with the phosphorylation of INSR substrates. Its function is as follows. Receptor tyrosine kinase which mediates the pleiotropic actions of insulin. Binding of insulin leads to phosphorylation of several intracellular substrates, including, insulin receptor substrates (IRS1, 2, 3, 4), SHC, GAB1, CBL and other signaling intermediates. Each of these phosphorylated proteins serve as docking proteins for other signaling proteins that contain Src-homology-2 domains (SH2 domain) that specifically recognize different phosphotyrosine residues, including the p85 regulatory subunit of PI3K and SHP2. Phosphorylation of IRSs proteins lead to the activation of two main signaling pathways: the PI3K-AKT/PKB pathway, which is responsible for most of the metabolic actions of insulin, and the Ras-MAPK pathway, which regulates expression of some genes and cooperates with the PI3K pathway to control cell growth and differentiation. Binding of the SH2 domains of PI3K to phosphotyrosines on IRS1 leads to the activation of PI3K and the generation of phosphatidylinositol-(3, 4, 5)-triphosphate (PIP3), a lipid second messenger, which activates several PIP3-dependent serine/threonine kinases, such as PDPK1 and subsequently AKT/PKB. The net effect of this pathway is to produce a translocation of the glucose transporter SLC2A4/GLUT4 from cytoplasmic vesicles to the cell membrane to facilitate glucose transport. Moreover, upon insulin stimulation, activated AKT/PKB is responsible for: anti-apoptotic effect of insulin by inducing phosphorylation of BAD; regulates the expression of gluconeogenic and lipogenic enzymes by controlling the activity of the winged helix or forkhead (FOX) class of transcription factors. Another pathway regulated by PI3K-AKT/PKB activation is mTORC1 signaling pathway which regulates cell growth and metabolism and integrates signals from insulin. AKT mediates insulin-stimulated protein synthesis by phosphorylating TSC2 thereby activating mTORC1 pathway. The Ras/RAF/MAP2K/MAPK pathway is mainly involved in mediating cell growth, survival and cellular differentiation of insulin. Phosphorylated IRS1 recruits GRB2/SOS complex, which triggers the activation of the Ras/RAF/MAP2K/MAPK pathway. In addition to binding insulin, the insulin receptor can bind insulin-like growth factors (IGFI and IGFII). When present in a hybrid receptor with IGF1R, binds IGF1. In adipocytes, inhibits lipolysis. The chain is Insulin receptor (INSR) from Macaca mulatta (Rhesus macaque).